Consider the following 145-residue polypeptide: MNKNNVLRGLLVLAGLSLSSLALAHGDVTPQAVDTKGLEPLGKEWRDTNPYRKPYAKHDLAVEIGASAYNQNCARCHGLEAKSGGIAPDLRLLETGAEGDEWFKERVINGAVRDGAVYMPKMADFISQEGLWAIRSYLESVHVDE.

An N-terminal signal peptide occupies residues 1 to 24; the sequence is MNKNNVLRGLLVLAGLSLSSLALA. A Cytochrome c domain is found at 60-142; the sequence is LAVEIGASAY…AIRSYLESVH (83 aa). Residues C73, C76, H77, and M119 each contribute to the heme c site.

In terms of assembly, monomer. Interacts with the quinoprotein ethanol dehydrogenase (QEDH) ExaA. Post-translationally, binds 1 heme group per subunit.

It localises to the periplasm. The protein operates within alcohol metabolism; ethanol degradation; acetate from ethanol. Is an essential component of the ethanol oxidation system that allows P.aeruginosa to grow on ethanol as the sole carbon and energy source. Is the direct electron acceptor of the quinoprotein ethanol dehydrogenase (QEDH). The polypeptide is Cytochrome c550 (Pseudomonas aeruginosa (strain ATCC 15692 / DSM 22644 / CIP 104116 / JCM 14847 / LMG 12228 / 1C / PRS 101 / PAO1)).